A 398-amino-acid polypeptide reads, in one-letter code: Glycosyltransferase GlyF (398 aa).

The tract at residues 1-259 (MRKSIVLAAD…SEIAFQRSDL (259 aa)) is GT8 domain. UDP is bound by residues 8 to 13 (AADNAY) and 101 to 102 (DS). Positions 101, 103, and 221 each coordinate Mn(2+). Residue 221-227 (HYASHDK) coordinates UDP.

This sequence in the N-terminal section; belongs to the glycosyltransferase 8 family.

In terms of biological role, may be involved in the polymorphic O-glycosylation of the serine-rich repeat protein PsrP. Has hydrolytic activity against UDP-galactose and to a lesser extent against UDP-glucose; no glycosyltransferase activity has been seen with tested substrates. The sequence is that of Glycosyltransferase GlyF from Streptococcus pneumoniae serotype 4 (strain ATCC BAA-334 / TIGR4).